Reading from the N-terminus, the 388-residue chain is Galactokinase (388 aa).

33–36 contacts substrate; that stretch reads EHTD. Residues Ser-67 and 124–130 each bind ATP; that span reads GSGLSSS. Mg(2+) is bound by residues Ser-130 and Glu-162. The active-site Proton acceptor is the Asp-174. Residue Tyr-224 coordinates substrate.

It belongs to the GHMP kinase family. GalK subfamily.

Its subcellular location is the cytoplasm. The catalysed reaction is alpha-D-galactose + ATP = alpha-D-galactose 1-phosphate + ADP + H(+). Its pathway is carbohydrate metabolism; galactose metabolism. Functionally, catalyzes the transfer of the gamma-phosphate of ATP to D-galactose to form alpha-D-galactose-1-phosphate (Gal-1-P). This is Galactokinase from Streptococcus thermophilus.